The chain runs to 228 residues: 5'-methylthioadenosine/S-adenosylhomocysteine nucleosidase (228 aa).

Glu11 acts as the Proton acceptor in catalysis. Substrate is bound by residues Gly77, Ile151, and Met172 to Glu173. Asp196 serves as the catalytic Proton donor.

It belongs to the PNP/UDP phosphorylase family. MtnN subfamily.

The catalysed reaction is S-adenosyl-L-homocysteine + H2O = S-(5-deoxy-D-ribos-5-yl)-L-homocysteine + adenine. It catalyses the reaction S-methyl-5'-thioadenosine + H2O = 5-(methylsulfanyl)-D-ribose + adenine. It carries out the reaction 5'-deoxyadenosine + H2O = 5-deoxy-D-ribose + adenine. The protein operates within amino-acid biosynthesis; L-methionine biosynthesis via salvage pathway; S-methyl-5-thio-alpha-D-ribose 1-phosphate from S-methyl-5'-thioadenosine (hydrolase route): step 1/2. Catalyzes the irreversible cleavage of the glycosidic bond in both 5'-methylthioadenosine (MTA) and S-adenosylhomocysteine (SAH/AdoHcy) to adenine and the corresponding thioribose, 5'-methylthioribose and S-ribosylhomocysteine, respectively. Also cleaves 5'-deoxyadenosine, a toxic by-product of radical S-adenosylmethionine (SAM) enzymes, into 5-deoxyribose and adenine. This Staphylococcus aureus (strain bovine RF122 / ET3-1) protein is 5'-methylthioadenosine/S-adenosylhomocysteine nucleosidase.